A 203-amino-acid chain; its full sequence is A-type ATP synthase subunit E (203 aa).

This sequence belongs to the V-ATPase E subunit family. Has multiple subunits with at least A(3), B(3), C, D, E, F, H, I and proteolipid K(x).

It is found in the cell membrane. In terms of biological role, component of the A-type ATP synthase that produces ATP from ADP in the presence of a proton gradient across the membrane. The protein is A-type ATP synthase subunit E of Methanococcus vannielii (strain ATCC 35089 / DSM 1224 / JCM 13029 / OCM 148 / SB).